Here is a 351-residue protein sequence, read N- to C-terminus: Fructose-1,6-bisphosphatase class 1 (351 aa).

Mg(2+) is bound by residues Glu94, Asp113, Leu115, and Asp116. Residues Asp116 to Ser119 and Asn207 each bind substrate. Glu279 serves as a coordination point for Mg(2+).

Belongs to the FBPase class 1 family. As to quaternary structure, homotetramer. It depends on Mg(2+) as a cofactor.

Its subcellular location is the cytoplasm. It carries out the reaction beta-D-fructose 1,6-bisphosphate + H2O = beta-D-fructose 6-phosphate + phosphate. Its pathway is carbohydrate biosynthesis; gluconeogenesis. This chain is Fructose-1,6-bisphosphatase class 1, found in Methylobacterium radiotolerans (strain ATCC 27329 / DSM 1819 / JCM 2831 / NBRC 15690 / NCIMB 10815 / 0-1).